The sequence spans 343 residues: F-box/kelch-repeat protein At3g08810 (343 aa).

The segment covering 1-15 has biased composition (basic residues); that stretch reads MSYPERKRKRSRWSK. Residues 1–25 are disordered; that stretch reads MSYPERKRKRSRWSKPHSTQNPSPS. The F-box domain maps to 20-66; that stretch reads QNPSPSLPDDVLLSIFARVSRLYYPTLSHVSESFRSLLASPELYKAR. Kelch repeat units follow at residues 134-181, 183-224, and 225-271; these read DIYN…VRDG, QGGH…LPDS, and YCVI…VILA.

The polypeptide is F-box/kelch-repeat protein At3g08810 (Arabidopsis thaliana (Mouse-ear cress)).